The primary structure comprises 135 residues: Type 3 secretion system stator protein (135 aa).

This sequence belongs to the SctL stator family. The core secretion machinery of the T3SS is composed of approximately 20 different proteins, including cytoplasmic components, a base, an export apparatus and a needle. This subunit is part of the cytosolic complex.

Its subcellular location is the cytoplasm. Functionally, component of the type III secretion system (T3SS), also called injectisome, which is used to inject bacterial effector proteins into eukaryotic host cells. Acts as a regulator of the HrcN/SctN ATPase activity. This is Type 3 secretion system stator protein from Rhizobium fredii (Sinorhizobium fredii).